Here is a 363-residue protein sequence, read N- to C-terminus: NAD(P)H-quinone oxidoreductase subunit 1, chloroplastic (363 aa).

8 helical membrane-spanning segments follow: residues 26 to 46 (FVWICVPIVVLILGITLGVLV), 96 to 116 (WLFALGPAIVVIPVLLSFLVI), 127 to 147 (ISIGMFFWIAVSSVAPVGLLV), 175 to 195 (LALCVLSVVLMSNSLSTIEIV), 203 to 223 (ILGWNIWRQPVGFIAFVISAL), 253 to 273 (FGLFYVASYLNLFASSLFVTI), 303 to 323 (GLIAFAITLSKAYLFLFASIL), and 343 to 363 (FLLPVALGNLLLTASFELALL).

This sequence belongs to the complex I subunit 1 family. As to quaternary structure, NDH is composed of at least 16 different subunits, 5 of which are encoded in the nucleus.

It is found in the plastid. Its subcellular location is the chloroplast thylakoid membrane. It carries out the reaction a plastoquinone + NADH + (n+1) H(+)(in) = a plastoquinol + NAD(+) + n H(+)(out). The enzyme catalyses a plastoquinone + NADPH + (n+1) H(+)(in) = a plastoquinol + NADP(+) + n H(+)(out). Functionally, NDH shuttles electrons from NAD(P)H:plastoquinone, via FMN and iron-sulfur (Fe-S) centers, to quinones in the photosynthetic chain and possibly in a chloroplast respiratory chain. The immediate electron acceptor for the enzyme in this species is believed to be plastoquinone. Couples the redox reaction to proton translocation, and thus conserves the redox energy in a proton gradient. The chain is NAD(P)H-quinone oxidoreductase subunit 1, chloroplastic from Zygnema circumcarinatum (Green alga).